Reading from the N-terminus, the 1020-residue chain is UPF0182 protein jk1603 (1020 aa).

The segment covering 1–18 (MSTPTPPSSGRPKQPFPS) has biased composition (pro residues). Residues 1 to 23 (MSTPTPPSSGRPKQPFPSSPGSS) form a disordered region. 7 helical membrane passes run 28-48 (ILGI…VVVS), 73-93 (LVLF…AAFL), 125-145 (FLVG…QSNW), 175-195 (LPFL…AFVI), 227-247 (LAVI…FDRY), 272-292 (QIVL…TIVL), and 300-320 (LAVA…PAML). The tract at residues 924 to 998 (QEIDGSVVDP…KVNKTRESGT (75 aa)) is disordered. 2 stretches are compositionally biased toward basic and acidic residues: residues 942–961 (KGDK…EQSS) and 969–998 (KSDD…ESGT).

The protein belongs to the UPF0182 family.

The protein resides in the cell membrane. This is UPF0182 protein jk1603 from Corynebacterium jeikeium (strain K411).